The primary structure comprises 206 residues: Phosphatidyl-N-methylethanolamine N-methyltransferase (206 aa).

Over 1 to 20 (MKESVQEIIQQLIHSVDLQS) the chain is Lumenal. Positions 21-41 (SKFQLAIVCTMFNPIFWNIVA) form an intramembrane region, helical. The Lumenal portion of the chain corresponds to 42–53 (RMEYHKHSLTKM). The helical transmembrane segment at 54–74 (CGGARKGCYMLAATIFSLGIV) threads the bilayer. Residues 75 to 101 (RDMVYESALREQPTCSLITGENWTKLG) lie on the Cytoplasmic side of the membrane. The helical transmembrane segment at 102–122 (VALFGLGQVLVLSSMYKLGIT) threads the bilayer. 106-108 (GLG) provides a ligand contact to S-adenosyl-L-methionine. Topologically, residues 123–165 (GTYLGDYFGILMDERVTGFPFNVSNNPMYQGSTLSFLGIALYK) are lumenal. Residues 166–186 (GKPAGLVVSAVVYFMYKIALR) traverse the membrane as a helical segment. Topologically, residues 187–206 (WEEPFTAMIYANRDKAKKNM) are cytoplasmic. 188–189 (EE) provides a ligand contact to S-adenosyl-L-methionine.

Belongs to the class VI-like SAM-binding methyltransferase superfamily. PEMT/PEM2 methyltransferase family.

It is found in the endoplasmic reticulum membrane. It localises to the mitochondrion membrane. The catalysed reaction is a 1,2-diacyl-sn-glycero-3-phosphoethanolamine + S-adenosyl-L-methionine = a 1,2-diacyl-sn-glycero-3-phospho-N-methylethanolamine + S-adenosyl-L-homocysteine + H(+). It carries out the reaction a 1,2-diacyl-sn-glycero-3-phospho-N-methylethanolamine + S-adenosyl-L-methionine = a 1,2-diacyl-sn-glycero-3-phospho-N,N-dimethylethanolamine + S-adenosyl-L-homocysteine + H(+). It catalyses the reaction a 1,2-diacyl-sn-glycero-3-phospho-N,N-dimethylethanolamine + S-adenosyl-L-methionine = a 1,2-diacyl-sn-glycero-3-phosphocholine + S-adenosyl-L-homocysteine + H(+). It functions in the pathway phospholipid metabolism; phosphatidylcholine biosynthesis. Its function is as follows. Catalyzes the second two steps of the methylation pathway of phosphatidylcholine biosynthesis, the SAM-dependent methylation of phosphatidylmonomethylethanolamine (PMME) to phosphatidyldimethylethanolamine (PDME) and of PDME to phosphatidylcholine (PC). Can also catalyze the first methylation reaction of PE to PMME in the absence of PE methyltransferase CHO2. In Saccharomyces cerevisiae (strain ATCC 204508 / S288c) (Baker's yeast), this protein is Phosphatidyl-N-methylethanolamine N-methyltransferase.